A 529-amino-acid polypeptide reads, in one-letter code: Meiosis 1 arrest protein (529 aa).

Disordered regions lie at residues 180 to 201 (KGIQERSDSPSPTEEPSNDESS) and 504 to 529 (AASKASSAAFLPSDSEEGEEERPSHT). Residues 188-200 (SPSPTEEPSNDES) are compositionally biased toward polar residues. A Phosphoserine modification is found at Ser-516.

Expressed in germ cells of the testis. Expressed from spermatogonia to spermatids. Expressed at very low levels in lung, stomach, thymus. Not detected in Sertoli cells.

Its subcellular location is the cytoplasm. In terms of biological role, required for meiosis I progression during spermatogenesis. This Mus musculus (Mouse) protein is Meiosis 1 arrest protein (M1ap).